We begin with the raw amino-acid sequence, 292 residues long: Ribosomal protein L11 methyltransferase (292 aa).

Residues Thr144, Gly165, Asp187, and Asn229 each contribute to the S-adenosyl-L-methionine site.

It belongs to the methyltransferase superfamily. PrmA family.

The protein resides in the cytoplasm. The enzyme catalyses L-lysyl-[protein] + 3 S-adenosyl-L-methionine = N(6),N(6),N(6)-trimethyl-L-lysyl-[protein] + 3 S-adenosyl-L-homocysteine + 3 H(+). In terms of biological role, methylates ribosomal protein L11. This chain is Ribosomal protein L11 methyltransferase, found in Pseudomonas fluorescens (strain Pf0-1).